The following is a 160-amino-acid chain: MSKFTHINEQGNAKMVDVSNKNITKRTAQAHSSITVNETIYQQIIDNTNKKGNVLNTAQIAGIMAAKNTSTIIPMCHPLPLTGIDVQFNWQINDNTTYTLNITAIVSTTGKTGVEMEALTAASATALTVYDMTKAVDKGMIIGETYLESKSGGKSGDYRR.

Residues Met-75 to His-77 and Met-116 to Glu-117 contribute to the substrate site. Residue Asp-131 is part of the active site.

It belongs to the MoaC family. As to quaternary structure, homohexamer; trimer of dimers.

The catalysed reaction is (8S)-3',8-cyclo-7,8-dihydroguanosine 5'-triphosphate = cyclic pyranopterin phosphate + diphosphate. The protein operates within cofactor biosynthesis; molybdopterin biosynthesis. Its function is as follows. Catalyzes the conversion of (8S)-3',8-cyclo-7,8-dihydroguanosine 5'-triphosphate to cyclic pyranopterin monophosphate (cPMP). In Staphylococcus haemolyticus (strain JCSC1435), this protein is Cyclic pyranopterin monophosphate synthase.